The primary structure comprises 348 residues: MDVHYDADPALIHDKQVAVIGYGSQGHAHALNLHDSGVDVAVGLRPGSSSRPKAEQQGLTVMDIGEAAAWGDVVMLLIPDQHQKDVYEAKIAEHMTPGTALGFGHGFNIHYDRIEPPEAVDVFMVAPKSPGHLVRRTYTDGSGVPCLAAVDQDPSGGAMALAISYADAIGGTHAGVIETTFKDETETDLFGEQAVLCGGSQALIQAGFETLVDAGYPEELAYFECLHELKLIVDLYYEGGLEYMNHSVSDTAEYGGYTRGPRVIDDAVREQMQEILEEVQSGEFADEWIEEYEQGAPQLQEERAALTEHPIEQVGQTLRGMMPWLNGDETSADEDAPDAADTAPASSS.

The KARI N-terminal Rossmann domain maps to 1–179; it reads MDVHYDADPA…GGTHAGVIET (179 aa). Residues 22–25, Arg45, Ser48, Ser50, and 80–83 each bind NADP(+); these read YGSQ and DQHQ. His105 is an active-site residue. Gly131 contacts NADP(+). The 146-residue stretch at 180 to 325 folds into the KARI C-terminal knotted domain; it reads TFKDETETDL…QTLRGMMPWL (146 aa). Asp188, Glu192, Glu224, and Glu228 together coordinate Mg(2+). Ser249 lines the substrate pocket. Residues 323 to 348 form a disordered region; that stretch reads PWLNGDETSADEDAPDAADTAPASSS. A compositionally biased stretch (low complexity) spans 339–348; sequence AADTAPASSS.

The protein belongs to the ketol-acid reductoisomerase family. Mg(2+) serves as cofactor.

It carries out the reaction (2R)-2,3-dihydroxy-3-methylbutanoate + NADP(+) = (2S)-2-acetolactate + NADPH + H(+). The enzyme catalyses (2R,3R)-2,3-dihydroxy-3-methylpentanoate + NADP(+) = (S)-2-ethyl-2-hydroxy-3-oxobutanoate + NADPH + H(+). It functions in the pathway amino-acid biosynthesis; L-isoleucine biosynthesis; L-isoleucine from 2-oxobutanoate: step 2/4. The protein operates within amino-acid biosynthesis; L-valine biosynthesis; L-valine from pyruvate: step 2/4. Functionally, involved in the biosynthesis of branched-chain amino acids (BCAA). Catalyzes an alkyl-migration followed by a ketol-acid reduction of (S)-2-acetolactate (S2AL) to yield (R)-2,3-dihydroxy-isovalerate. In the isomerase reaction, S2AL is rearranged via a Mg-dependent methyl migration to produce 3-hydroxy-3-methyl-2-ketobutyrate (HMKB). In the reductase reaction, this 2-ketoacid undergoes a metal-dependent reduction by NADPH to yield (R)-2,3-dihydroxy-isovalerate. In Salinibacter ruber (strain DSM 13855 / M31), this protein is Ketol-acid reductoisomerase (NADP(+)).